A 497-amino-acid polypeptide reads, in one-letter code: Lysine--tRNA ligase (497 aa).

Mg(2+) is bound by residues E409 and E416.

The protein belongs to the class-II aminoacyl-tRNA synthetase family. Homodimer. It depends on Mg(2+) as a cofactor.

Its subcellular location is the cytoplasm. The enzyme catalyses tRNA(Lys) + L-lysine + ATP = L-lysyl-tRNA(Lys) + AMP + diphosphate. In Streptococcus pyogenes serotype M3 (strain ATCC BAA-595 / MGAS315), this protein is Lysine--tRNA ligase.